Reading from the N-terminus, the 419-residue chain is AT-rich binding protein (419 aa).

A C2H2-type 1 zinc finger spans residues 29–52 (IVCHTCQEELQTQDAFWKHIQDEH). Positions 121-179 (LHEAQHQQQQQQQQHQQQQQQQQHQQQQQHQHHQHQQQQQHLHQQQQQQQQQQRDAAKE) are disordered. Composition is skewed to low complexity over residues 126 to 149 (HQQQ…QQQQ) and 156 to 173 (QQQQ…QQQQ). 2 consecutive C2H2-type zinc fingers follow at residues 352 to 376 (YVCD…RVVH) and 382 to 405 (FNCD…KKKH).

The protein resides in the nucleus. Functionally, may be a transcription factor for genes having (A+T) stretches in their promoter and/or enhancer regions. Binds to AT rich DNA. This is AT-rich binding protein from Drosophila grimshawi (Hawaiian fruit fly).